A 1792-amino-acid polypeptide reads, in one-letter code: uncharacterized protein (1792 aa).

Residues 1-28 (MNNNNNNNNNSNNNNNSNNNNNGNSNNN) show a composition bias toward low complexity. 13 disordered regions span residues 1–34 (MNNN…SGKG), 162–187 (TNIS…SHHH), 440–461 (KKRK…NKSS), 544–568 (VIDD…SIIN), 736–777 (NKNK…INSN), 837–979 (TKGK…NDLK), 1044–1071 (VSKS…KEQS), 1084–1106 (NMNN…NDNK), 1160–1215 (TSSG…VLER), 1257–1290 (NITA…NNNG), 1651–1686 (LRSK…GRKK), 1704–1731 (PRKK…NSEK), and 1742–1761 (IENK…NLNN). The span at 169–182 (KQPISSNQHPYQQK) shows a compositional bias: polar residues. The span at 550-559 (KRNKKEKKKT) shows a compositional bias: basic residues. Over residues 741–776 (PNNINSNDNNNKNDDNNNNNNKNVDGNNNNNNNINS) the composition is skewed to low complexity. The span at 838-847 (KGKKKGRKKK) shows a compositional bias: basic residues. Positions 856–873 (NIKEDIKSSKKDKKKDNI) are enriched in basic and acidic residues. A compositionally biased stretch (low complexity) spans 874–924 (NDNNNDNNNDNNNDNNNDNNNDNNNDNNNDNNNNNNNNNNNNNNNNNNNHN). Residues 943-954 (KKKTRQYRKKSK) show a composition bias toward basic residues. Over residues 955 to 966 (ITNDDNNEKIKQ) the composition is skewed to basic and acidic residues. Residues 1045–1057 (SKSNIPSSFSSPP) are compositionally biased toward low complexity. Composition is skewed to basic and acidic residues over residues 1060-1071 (TNNKNDIDKEQS), 1088-1106 (EKSK…NDNK), and 1166-1192 (NKEE…KNVD). The span at 1205–1215 (RKKRKKDVLER) shows a compositional bias: basic residues. Residues 1261–1289 (NNNNDNNKNNDNDNNNNNNDNIINNNNNN) show a composition bias toward low complexity. Composition is skewed to basic residues over residues 1660 to 1686 (KEHK…GRKK) and 1704 to 1717 (PRKK…RKSK).

This is an uncharacterized protein from Plasmodium falciparum (isolate 3D7).